Here is a 250-residue protein sequence, read N- to C-terminus: Tryptophan synthase alpha chain (250 aa).

Residues E31 and D42 each act as proton acceptor in the active site.

Belongs to the TrpA family. As to quaternary structure, tetramer of two alpha and two beta chains.

The enzyme catalyses (1S,2R)-1-C-(indol-3-yl)glycerol 3-phosphate + L-serine = D-glyceraldehyde 3-phosphate + L-tryptophan + H2O. It participates in amino-acid biosynthesis; L-tryptophan biosynthesis; L-tryptophan from chorismate: step 5/5. Functionally, the alpha subunit is responsible for the aldol cleavage of indoleglycerol phosphate to indole and glyceraldehyde 3-phosphate. The polypeptide is Tryptophan synthase alpha chain (Staphylococcus carnosus (strain TM300)).